The primary structure comprises 99 residues: MDDVVRQIVIRGRVQGVGFRYWTMREAIRLGVAGWVRNRRDGSVEALFAGPADAVADMVARCRNGPGAARVDAVEDQPVAANAEKMIRPGERFSQLPTV.

One can recognise an Acylphosphatase-like domain in the interval 5 to 97 (VRQIVIRGRV…RPGERFSQLP (93 aa)). Catalysis depends on residues arginine 20 and asparagine 38.

This sequence belongs to the acylphosphatase family.

It carries out the reaction an acyl phosphate + H2O = a carboxylate + phosphate + H(+). The sequence is that of Acylphosphatase (acyP) from Nitrobacter hamburgensis (strain DSM 10229 / NCIMB 13809 / X14).